The following is a 377-amino-acid chain: Glutamate 5-kinase (377 aa).

Lys20 contributes to the ATP binding site. Substrate contacts are provided by Ser60, Asp147, and Asn159. Position 179–180 (179–180) interacts with ATP; sequence TD. Residues 285–363 form the PUA domain; it reads AGRLVIDAGA…DKVHQVLGEA (79 aa).

The protein belongs to the glutamate 5-kinase family.

It localises to the cytoplasm. The enzyme catalyses L-glutamate + ATP = L-glutamyl 5-phosphate + ADP. The protein operates within amino-acid biosynthesis; L-proline biosynthesis; L-glutamate 5-semialdehyde from L-glutamate: step 1/2. Its function is as follows. Catalyzes the transfer of a phosphate group to glutamate to form L-glutamate 5-phosphate. This Acinetobacter baylyi (strain ATCC 33305 / BD413 / ADP1) protein is Glutamate 5-kinase.